The following is a 203-amino-acid chain: Glycerol-3-phosphate acyltransferase (203 aa).

Transmembrane regions (helical) follow at residues 4–24 (IAPG…AILV), 56–76 (VAVL…AYML), 80–100 (PFWL…PVFF), 112–132 (FGAI…TWLL), and 138–158 (GYSS…VWWF).

Belongs to the PlsY family. In terms of assembly, probably interacts with PlsX.

The protein resides in the cell inner membrane. It carries out the reaction an acyl phosphate + sn-glycerol 3-phosphate = a 1-acyl-sn-glycero-3-phosphate + phosphate. It functions in the pathway lipid metabolism; phospholipid metabolism. In terms of biological role, catalyzes the transfer of an acyl group from acyl-phosphate (acyl-PO(4)) to glycerol-3-phosphate (G3P) to form lysophosphatidic acid (LPA). This enzyme utilizes acyl-phosphate as fatty acyl donor, but not acyl-CoA or acyl-ACP. This is Glycerol-3-phosphate acyltransferase from Enterobacter sp. (strain 638).